The sequence spans 142 residues: Large ribosomal subunit protein uL13 (142 aa).

The protein belongs to the universal ribosomal protein uL13 family. As to quaternary structure, part of the 50S ribosomal subunit.

In terms of biological role, this protein is one of the early assembly proteins of the 50S ribosomal subunit, although it is not seen to bind rRNA by itself. It is important during the early stages of 50S assembly. The sequence is that of Large ribosomal subunit protein uL13 from Pseudomonas putida (strain W619).